We begin with the raw amino-acid sequence, 245 residues long: 5-oxoprolinase subunit A (245 aa).

This sequence belongs to the LamB/PxpA family. In terms of assembly, forms a complex composed of PxpA, PxpB and PxpC.

The enzyme catalyses 5-oxo-L-proline + ATP + 2 H2O = L-glutamate + ADP + phosphate + H(+). Functionally, catalyzes the cleavage of 5-oxoproline to form L-glutamate coupled to the hydrolysis of ATP to ADP and inorganic phosphate. The chain is 5-oxoprolinase subunit A from Neisseria meningitidis serogroup C (strain 053442).